The following is a 415-amino-acid chain: ATP-dependent RNA helicase RhlB (415 aa).

Residues 9–37 carry the Q motif motif; that stretch reads KKFSDFALYPPIVEVLDSKGFNNCTPIQA. Residues 40–219 enclose the Helicase ATP-binding domain; the sequence is LPTTLAGKDV…FEHMNNAEYV (180 aa). 53-60 lines the ATP pocket; it reads AQTGTGKT. The DEAD box signature appears at 165-168; sequence DEAD. Residues 245–390 enclose the Helicase C-terminal domain; sequence RLLQTLIEEE…VSKYNSDALL (146 aa). The tract at residues 396 to 415 is disordered; sequence PKRLTRRRSGAPRHNRKRPG. Residues 398–415 are compositionally biased toward basic residues; it reads RLTRRRSGAPRHNRKRPG.

It belongs to the DEAD box helicase family. RhlB subfamily. In terms of assembly, component of the RNA degradosome, which is a multiprotein complex involved in RNA processing and mRNA degradation.

The protein localises to the cytoplasm. It carries out the reaction ATP + H2O = ADP + phosphate + H(+). DEAD-box RNA helicase involved in RNA degradation. Has RNA-dependent ATPase activity and unwinds double-stranded RNA. The protein is ATP-dependent RNA helicase RhlB of Sodalis glossinidius (strain morsitans).